Consider the following 272-residue polypeptide: 3-methyl-2-oxobutanoate hydroxymethyltransferase (272 aa).

Mg(2+) is bound by residues Asp51 and Asp90. Residues 51-52, Asp90, and Lys118 contribute to the 3-methyl-2-oxobutanoate site; that span reads DS. Mg(2+) is bound at residue Glu120. Residue Glu187 is the Proton acceptor of the active site.

It belongs to the PanB family. In terms of assembly, homodecamer; pentamer of dimers. The cofactor is Mg(2+).

It localises to the cytoplasm. The catalysed reaction is 3-methyl-2-oxobutanoate + (6R)-5,10-methylene-5,6,7,8-tetrahydrofolate + H2O = 2-dehydropantoate + (6S)-5,6,7,8-tetrahydrofolate. Its pathway is cofactor biosynthesis; (R)-pantothenate biosynthesis; (R)-pantoate from 3-methyl-2-oxobutanoate: step 1/2. Catalyzes the reversible reaction in which hydroxymethyl group from 5,10-methylenetetrahydrofolate is transferred onto alpha-ketoisovalerate to form ketopantoate. The polypeptide is 3-methyl-2-oxobutanoate hydroxymethyltransferase (Xylella fastidiosa (strain M12)).